Reading from the N-terminus, the 287-residue chain is Small ribosomal subunit protein uS2 (287 aa).

The interval 235–287 is disordered; that stretch reads ESGFATGGGDWEATAPAAASGWDDAAAQPQNWDSAAQGAASWDEAAAPKEGQW. Residues 247–261 show a composition bias toward low complexity; the sequence is ATAPAAASGWDDAAA.

The protein belongs to the universal ribosomal protein uS2 family. Component of the small ribosomal subunit. Mature ribosomes consist of a small (40S) and a large (60S) subunit. The 40S subunit contains about 33 different proteins and 1 molecule of RNA (18S). The 60S subunit contains about 49 different proteins and 3 molecules of RNA (25S, 5.8S and 5S). Interacts with RPS21.

It localises to the cytoplasm. In terms of biological role, required for the assembly and/or stability of the 40S ribosomal subunit. Required for the processing of the 20S rRNA-precursor to mature 18S rRNA in a late step of the maturation of 40S ribosomal subunits. The sequence is that of Small ribosomal subunit protein uS2 from Pyricularia oryzae (strain 70-15 / ATCC MYA-4617 / FGSC 8958) (Rice blast fungus).